Here is a 445-residue protein sequence, read N- to C-terminus: Pre-B-cell leukemia transcription factor 2 (445 aa).

The tract at residues 13–44 (VGIPGLPIHGGPQTLTPHPMHEPPTDNGEPRK) is disordered. Over residues 31 to 44 (PMHEPPTDNGEPRK) the composition is skewed to basic and acidic residues. The PBC domain occupies 42 to 236 (PRKQDIGDIL…VMILRSRFLD (195 aa)). A PBC-A region spans residues 49 to 128 (DILQQIMTIT…EGVAGPEKGG (80 aa)). The PBC-B stretch occupies residues 131-236 (AAAAAAAAAS…VMILRSRFLD (106 aa)). Positions 237–299 (ARRKRRNFSK…NKRIRYKKNI (63 aa)) form a DNA-binding region, homeobox; TALE-type. Residues 319-332 (QGGHSGANSPTTPT) show a composition bias toward polar residues. Positions 319 to 338 (QGGHSGANSPTTPTSAGSGG) are disordered.

It belongs to the TALE/PBX homeobox family.

Its subcellular location is the nucleus. Its function is as follows. Transcriptional activator that binds the sequence 5'-ATCAATCAA-3'. The sequence is that of Pre-B-cell leukemia transcription factor 2 (pbx2) from Xenopus laevis (African clawed frog).